The sequence spans 166 residues: MLSKDLLEALNDQMNHEYFAAHAYMAMAAYCDDASYEGFANFYIQQAKEERFHGKKIYDYINDRGEHAEFKSIPAPKTEFKSILETFKDGLAQEQDVTRRFYNLSEIAQKDKDYATISFLNWFLDEQVEEESTFETHIDYLNRIGDDCNTLYLYEKELAARSFDEE.

The 144-residue stretch at 2 to 145 folds into the Ferritin-like diiron domain; the sequence is LSKDLLEALN…THIDYLNRIG (144 aa). Fe cation-binding residues include Glu17, Glu50, His53, Glu94, and Gln127.

It belongs to the ferritin family. Prokaryotic subfamily.

It is found in the cytoplasm. The catalysed reaction is 4 Fe(2+) + O2 + 6 H2O = 4 iron(III) oxide-hydroxide + 12 H(+). Iron-storage protein. This chain is Bacterial non-heme ferritin (ftnA), found in Staphylococcus haemolyticus (strain JCSC1435).